The following is a 757-amino-acid chain: Endosialin (757 aa).

An N-terminal signal peptide occupies residues 1–17; sequence MLLRLLLAWAAAGPTLG. The Extracellular portion of the chain corresponds to 18-687; sequence QDPWAAEPRA…EHSQRDDRWL (670 aa). The 127-residue stretch at 30 to 156 folds into the C-type lectin domain; sequence GPSSCYALFP…CTLAVDGYLC (127 aa). A glycan (O-linked (GalNAc...) threonine) is linked at threonine 60. Cysteine 131 and cysteine 147 form a disulfide bridge. Positions 162–232 constitute a Sushi domain; sequence GACPALQDEA…WSRAGPLCLG (71 aa). Positions 312–351 constitute an EGF-like; calcium-binding domain; it reads DTDECQIAGVCQQMCVNYVGGFECYCSEGHELEADGISCS. Intrachain disulfides connect cysteine 316–cysteine 326, cysteine 322–cysteine 335, and cysteine 337–cysteine 350. Residues threonine 401, threonine 428, threonine 448, threonine 456, threonine 459, threonine 472, threonine 519, threonine 541, threonine 543, threonine 544, threonine 545, threonine 587, threonine 593, threonine 594, and threonine 595 are each glycosylated (O-linked (GalNAc...) threonine). O-linked (GalNAc...) serine glycans are attached at residues serine 598 and serine 601. Residues threonine 612 and threonine 619 are each glycosylated (O-linked (GalNAc...) threonine). Low complexity predominate over residues 618 to 627; the sequence is PTLLPSQSPT. Positions 618–662 are disordered; that stretch reads PTLLPSQSPTNQTSPISPTHPHSKAPQIPREDGPSPKLALWLPSP. O-linked (GalNAc...) serine glycosylation is found at serine 623 and serine 625. Residues threonine 627 and threonine 630 are each glycosylated (O-linked (GalNAc...) threonine). O-linked (GalNAc...) serine glycosylation is present at serine 631. O-linked (GalNAc...) threonine glycosylation is present at threonine 636. An O-linked (GalNAc...) serine glycan is attached at serine 640. A helical transmembrane segment spans residues 688–708; it reads LVALLVPTCVFLVVLLALGIV. The Cytoplasmic segment spans residues 709–757; the sequence is YCTRCGPHAPNKRITDCYRWVIHAGSKSPTEPMPPRGSLTGVQTCRTSV. Positions 737–757 are disordered; the sequence is PTEPMPPRGSLTGVQTCRTSV. A Phosphoserine modification is found at serine 746. Over residues 748 to 757 the composition is skewed to polar residues; sequence TGVQTCRTSV.

Interacts with PDGFRA; this interaction promotes PDGF receptor signaling pathway. Interacts with integrin beta-1/ITGB1. Interacts with insulin receptor/INSR; this interaction diminishes INSR autophosphorylation. Post-translationally, O-glycosylated with sialylated oligosaccharides. In terms of processing, may be N-glycosylated. In terms of tissue distribution, expressed in tumor endothelial cells but absent or barely detectable in normal endothelial cells. Expressed in metastatic lesions of the liver and during angiogenesis of corpus luteum formation and wound healing. Expressed in vascular endothelial cells of malignant tumors but not in normal blood vessels. Expressed in stromal fibroblasts. Strongly expressed in pericytes. Expressed on stromal cells and cells with lymphoid morphology such a T-cells.

The protein localises to the membrane. In terms of biological role, cell surface glycoprotein involved in various biological processes including angiogenesis, immune response modulation, and tissue remodeling and repair. Participates in pericyte proliferation through positive modulation of the PDGF receptor signaling pathway. Acts as a scaffold for factor X, triggering allosteric changes and the spatial re-alignment of factor X with the TF-factor VIIa complex, thereby enhancing coagulation activation. Modulates the insulin signaling pathway by interacting with insulin receptor/INSR and by diminishing its capacity to be autophosphorylated in response to insulin. Also regulates LPS-induced inflammatory response in macrophages by favoring the production of proinflammatory cytokines. In human, negatively regulates T-cell proliferation compared with stromal cells where it increases proliferation. The polypeptide is Endosialin (CD248) (Homo sapiens (Human)).